Here is a 657-residue protein sequence, read N- to C-terminus: 9-cis-epoxycarotenoid dioxygenase NCED9, chloroplastic (657 aa).

Residues H357, H406, H471, and H642 each coordinate Fe cation.

This sequence belongs to the carotenoid oxygenase family. Fe(2+) is required as a cofactor. Expressed in developing siliques, embryo and endosperm.

It is found in the plastid. It localises to the chloroplast stroma. It catalyses the reaction a 9-cis-epoxycarotenoid + O2 = a 12'-apo-carotenal + 2-cis,4-trans-xanthoxin. The catalysed reaction is 9-cis-violaxanthin + O2 = (3S,5R,6S)-5,6-epoxy-3-hydroxy-5,6-dihydro-12'-apo-beta-caroten-12'-al + 2-cis,4-trans-xanthoxin. It carries out the reaction 9'-cis-neoxanthin + O2 = (3S,5R,6R)-3,5-dihydroxy-6,7-didehydro-5,6-dihydro-12'-apo-beta-caroten-12'-al + 2-cis,4-trans-xanthoxin. Its function is as follows. Has a 11,12(11',12') 9-cis epoxycarotenoid cleavage activity. Catalyzes the first step of abscisic-acid biosynthesis from carotenoids. Contributes probably to abscisic acid synthesis for the induction of seed dormancy. This chain is 9-cis-epoxycarotenoid dioxygenase NCED9, chloroplastic (NCED9), found in Arabidopsis thaliana (Mouse-ear cress).